The primary structure comprises 229 residues: Uridylate kinase (229 aa).

Gly-11 to Ser-12 provides a ligand contact to ATP. Gly-45 is a UMP binding site. 2 residues coordinate ATP: Gly-46 and Arg-50. UMP is bound by residues Asp-67 and Thr-114 to Thr-120. 3 residues coordinate ATP: Thr-140, Tyr-146, and Asp-149.

It belongs to the UMP kinase family. In terms of assembly, homohexamer.

The protein localises to the cytoplasm. It catalyses the reaction UMP + ATP = UDP + ADP. The protein operates within pyrimidine metabolism; CTP biosynthesis via de novo pathway; UDP from UMP (UMPK route): step 1/1. With respect to regulation, inhibited by UTP. Catalyzes the reversible phosphorylation of UMP to UDP. This is Uridylate kinase from Thermoplasma acidophilum (strain ATCC 25905 / DSM 1728 / JCM 9062 / NBRC 15155 / AMRC-C165).